The sequence spans 89 residues: Small ribosomal subunit protein bS20 (89 aa).

Residues 1 to 25 (MANTPQSKKRARQLERRTAVNKARR) form a disordered region.

It belongs to the bacterial ribosomal protein bS20 family.

Its function is as follows. Binds directly to 16S ribosomal RNA. The sequence is that of Small ribosomal subunit protein bS20 from Paracoccus denitrificans (strain Pd 1222).